A 502-amino-acid polypeptide reads, in one-letter code: ATP synthase subunit alpha (502 aa).

169–176 (GDRQTGKT) is an ATP binding site.

This sequence belongs to the ATPase alpha/beta chains family. In terms of assembly, F-type ATPases have 2 components, CF(1) - the catalytic core - and CF(0) - the membrane proton channel. CF(1) has five subunits: alpha(3), beta(3), gamma(1), delta(1), epsilon(1). CF(0) has three main subunits: a(1), b(2) and c(9-12). The alpha and beta chains form an alternating ring which encloses part of the gamma chain. CF(1) is attached to CF(0) by a central stalk formed by the gamma and epsilon chains, while a peripheral stalk is formed by the delta and b chains.

Its subcellular location is the cell inner membrane. It catalyses the reaction ATP + H2O + 4 H(+)(in) = ADP + phosphate + 5 H(+)(out). In terms of biological role, produces ATP from ADP in the presence of a proton gradient across the membrane. The alpha chain is a regulatory subunit. The chain is ATP synthase subunit alpha from Nitratidesulfovibrio vulgaris (strain ATCC 29579 / DSM 644 / CCUG 34227 / NCIMB 8303 / VKM B-1760 / Hildenborough) (Desulfovibrio vulgaris).